A 316-amino-acid chain; its full sequence is Retinol dehydrogenase 12 (316 aa).

NADP(+) is bound at residue 46–52; the sequence is GANTGIG. Ser-175 lines the substrate pocket. The active-site Proton acceptor is Tyr-200.

It belongs to the short-chain dehydrogenases/reductases (SDR) family. As to expression, expressed in the retina.

It carries out the reaction all-trans-retinol + NADP(+) = all-trans-retinal + NADPH + H(+). The catalysed reaction is 11-cis-retinol + NADP(+) = 11-cis-retinal + NADPH + H(+). It catalyses the reaction 9-cis-retinol + NADP(+) = 9-cis-retinal + NADPH + H(+). The enzyme catalyses a 4-hydroxynonen-1-ol + NADP(+) = a 4-hydroxynonenal + NADPH + H(+). It carries out the reaction (E)-non-2-en-1-ol + NADP(+) = (E)-non-2-enal + NADPH + H(+). The catalysed reaction is (Z)-non-6-en-1-ol + NADP(+) = (Z)-non-6-enal + NADPH + H(+). It catalyses the reaction nonan-1-ol + NADP(+) = nonanal + NADPH + H(+). Its pathway is cofactor metabolism; retinol metabolism. In terms of biological role, retinoids dehydrogenase/reductase with a clear preference for NADP. Displays high activity towards 9-cis, 11-cis and all-trans-retinal. Shows very weak activity towards 13-cis-retinol. Also exhibits activity, albeit with lower affinity than for retinaldehydes, towards lipid peroxidation products (C9 aldehydes) such as 4-hydroxynonenal and trans-2-nonenal. May play an important function in photoreceptor cells to detoxify 4-hydroxynonenal and potentially other toxic aldehyde products resulting from lipid peroxidation. Has no dehydrogenase activity towards steroids. The sequence is that of Retinol dehydrogenase 12 (RDH12) from Bos taurus (Bovine).